Here is a 191-residue protein sequence, read N- to C-terminus: Orotate phosphoribosyltransferase (191 aa).

116–124 provides a ligand contact to 5-phospho-alpha-D-ribose 1-diphosphate; the sequence is EDVVTTGGS. The orotate site is built by Thr-120 and Arg-148.

This sequence belongs to the purine/pyrimidine phosphoribosyltransferase family. PyrE subfamily. In terms of assembly, homodimer. Requires Mg(2+) as cofactor.

It catalyses the reaction orotidine 5'-phosphate + diphosphate = orotate + 5-phospho-alpha-D-ribose 1-diphosphate. It participates in pyrimidine metabolism; UMP biosynthesis via de novo pathway; UMP from orotate: step 1/2. Its function is as follows. Catalyzes the transfer of a ribosyl phosphate group from 5-phosphoribose 1-diphosphate to orotate, leading to the formation of orotidine monophosphate (OMP). The polypeptide is Orotate phosphoribosyltransferase (Heliobacterium modesticaldum (strain ATCC 51547 / Ice1)).